The chain runs to 182 residues: Inorganic pyrophosphatase (182 aa).

The substrate site is built by lysine 30, arginine 44, and tyrosine 56. Mg(2+) contacts are provided by aspartate 66, aspartate 71, and aspartate 103. Tyrosine 142 lines the substrate pocket.

Belongs to the PPase family. In terms of assembly, homohexamer. Requires Mg(2+) as cofactor.

It localises to the cytoplasm. It carries out the reaction diphosphate + H2O = 2 phosphate + H(+). In terms of biological role, catalyzes the hydrolysis of inorganic pyrophosphate (PPi) forming two phosphate ions. This Buchnera aphidicola subsp. Acyrthosiphon pisum (strain APS) (Acyrthosiphon pisum symbiotic bacterium) protein is Inorganic pyrophosphatase.